Here is a 155-residue protein sequence, read N- to C-terminus: RNA pyrophosphohydrolase (155 aa).

Residues 5 to 147 (KYRPNVAAII…KRQVYRQVIA (143 aa)) enclose the Nudix hydrolase domain. A Nudix box motif is present at residues 42–63 (GGIDEGETPLEALHRELLEEIG).

It belongs to the Nudix hydrolase family. RppH subfamily. A divalent metal cation serves as cofactor.

In terms of biological role, accelerates the degradation of transcripts by removing pyrophosphate from the 5'-end of triphosphorylated RNA, leading to a more labile monophosphorylated state that can stimulate subsequent ribonuclease cleavage. The sequence is that of RNA pyrophosphohydrolase from Helicobacter pylori (strain ATCC 700392 / 26695) (Campylobacter pylori).